The chain runs to 220 residues: Metalloproteinase inhibitor 2 (220 aa).

Positions 1-26 are cleaved as a signal peptide; that stretch reads MGAAARSLRLALGLLLLATLLRPADA. Cys-27 provides a ligand contact to Zn(2+). 2 involved in metalloproteinase-binding regions span residues 27 to 30 and 95 to 96; these read CSCS and SA. Disulfide bonds link Cys-27–Cys-98, Cys-29–Cys-127, Cys-39–Cys-152, Cys-154–Cys-201, Cys-159–Cys-164, and Cys-172–Cys-193. The NTR domain occupies 27–152; that stretch reads CSCSPVHPQQ…SLNHRYQMGC (126 aa).

Belongs to the protease inhibitor I35 (TIMP) family. As to quaternary structure, interacts (via the C-terminal) with MMP2 (via the C-terminal PEX domain); the interaction inhibits the MMP2 activity. In terms of processing, the activity of TIMP2 is dependent on the presence of disulfide bonds.

Its subcellular location is the secreted. Its function is as follows. Complexes with metalloproteinases (such as collagenases) and irreversibly inactivates them by binding to their catalytic zinc cofactor. The sequence is that of Metalloproteinase inhibitor 2 (Timp2) from Rattus norvegicus (Rat).